Here is a 303-residue protein sequence, read N- to C-terminus: Inner kinetochore subunit mal2 (303 aa).

The protein belongs to the CENP-O/MCM21 family. Component of the heterotetrameric kinetochore subcomplex COMA, which consists of fta2, fta7, mal2 and mis17. The COMA subcomplex is part of a larger constitutive centromere-associated network (CCAN) (also known as central kinetochore Sim4 complex in fission yeast), which is composed of at least cnl2, cnp3, cnp20, fta1, fta2, fta3, fta4, fta6, fta7, mal2, mhf1, mhf2, mis6, mis15, mis17, sim4 and wip1.

It is found in the nucleus. The protein resides in the chromosome. The protein localises to the centromere. Its subcellular location is the kinetochore. Its function is as follows. Component of the kinetochore, a multiprotein complex that assembles on centromeric DNA and attaches chromosomes to spindle microtubules, mediating chromosome segregation and sister chromatid segregation during meiosis and mitosis. Component of the inner kinetochore COMA complex, which connects centromere-associated proteins and the outer kinetochore. COMA interacts with other inner kinetochore proteins to form the inner kinetochore constitutive centromere-associated network (CCAN), which serves as a structural platform for outer kinetochore assembly. The polypeptide is Inner kinetochore subunit mal2 (mal2) (Schizosaccharomyces pombe (strain 972 / ATCC 24843) (Fission yeast)).